A 149-amino-acid chain; its full sequence is Transcriptional repressor NrdR (149 aa).

A zinc finger spans residues 3 to 34 (CPFCSATDTKVIDSRLVSDGHQVRRRRQCLAC). Residues 49-139 (PKVIKSNGNR…VYRSFEDIKE (91 aa)) form the ATP-cone domain.

This sequence belongs to the NrdR family. Zn(2+) is required as a cofactor.

Functionally, negatively regulates transcription of bacterial ribonucleotide reductase nrd genes and operons by binding to NrdR-boxes. The chain is Transcriptional repressor NrdR from Aliivibrio salmonicida (strain LFI1238) (Vibrio salmonicida (strain LFI1238)).